Here is a 90-residue protein sequence, read N- to C-terminus: Elongation factor 1-beta (90 aa).

It belongs to the EF-1-beta/EF-1-delta family.

In terms of biological role, promotes the exchange of GDP for GTP in EF-1-alpha/GDP, thus allowing the regeneration of EF-1-alpha/GTP that could then be used to form the ternary complex EF-1-alpha/GTP/AAtRNA. The protein is Elongation factor 1-beta of Staphylothermus marinus (strain ATCC 43588 / DSM 3639 / JCM 9404 / F1).